The primary structure comprises 354 residues: MIETDKLAAPARVIAATPASSQEEAFERALRPKLLDEYVGQEKVRGQLDIFMHAARKRREALDHVLLFGPPGLGKTTLAHIIAREMGVSLRQTSGPVLERPGDLAALLTNLEANDVLFIDEIHRLSPVVEEILYPALEDYQIDIMIGEGPAARSVKLDLQPFTLVGATTRAGMLTNPLRDRFGIVARLEFYTAEELARIVTRSAQLLQARIDPQGALEIARRARGTPRIANRLLRRVRDYAEVKGDGTITREMADAALAMLDVDRVGFDLMDRKLLEAVLHKFGGGPVGVDNLAAAIGEERDTIEDVLEPYLIQQGYLQRTPRGRVATAAAYRHFGLASPQGMAGDAGELFGDA.

Residues T4–Y191 are large ATPase domain (RuvB-L). Residues L30, R31, G72, K75, T76, T77, E138–Y140, R181, Y191, and R228 each bind ATP. T76 is a Mg(2+) binding site. Residues T192–D262 form a small ATPAse domain (RuvB-S) region. Residues R265–A354 are head domain (RuvB-H). DNA contacts are provided by R301, R320, and R325.

Belongs to the RuvB family. Homohexamer. Forms an RuvA(8)-RuvB(12)-Holliday junction (HJ) complex. HJ DNA is sandwiched between 2 RuvA tetramers; dsDNA enters through RuvA and exits via RuvB. An RuvB hexamer assembles on each DNA strand where it exits the tetramer. Each RuvB hexamer is contacted by two RuvA subunits (via domain III) on 2 adjacent RuvB subunits; this complex drives branch migration. In the full resolvosome a probable DNA-RuvA(4)-RuvB(12)-RuvC(2) complex forms which resolves the HJ.

It is found in the cytoplasm. The catalysed reaction is ATP + H2O = ADP + phosphate + H(+). In terms of biological role, the RuvA-RuvB-RuvC complex processes Holliday junction (HJ) DNA during genetic recombination and DNA repair, while the RuvA-RuvB complex plays an important role in the rescue of blocked DNA replication forks via replication fork reversal (RFR). RuvA specifically binds to HJ cruciform DNA, conferring on it an open structure. The RuvB hexamer acts as an ATP-dependent pump, pulling dsDNA into and through the RuvAB complex. RuvB forms 2 homohexamers on either side of HJ DNA bound by 1 or 2 RuvA tetramers; 4 subunits per hexamer contact DNA at a time. Coordinated motions by a converter formed by DNA-disengaged RuvB subunits stimulates ATP hydrolysis and nucleotide exchange. Immobilization of the converter enables RuvB to convert the ATP-contained energy into a lever motion, pulling 2 nucleotides of DNA out of the RuvA tetramer per ATP hydrolyzed, thus driving DNA branch migration. The RuvB motors rotate together with the DNA substrate, which together with the progressing nucleotide cycle form the mechanistic basis for DNA recombination by continuous HJ branch migration. Branch migration allows RuvC to scan DNA until it finds its consensus sequence, where it cleaves and resolves cruciform DNA. The sequence is that of Holliday junction branch migration complex subunit RuvB from Cupriavidus taiwanensis (strain DSM 17343 / BCRC 17206 / CCUG 44338 / CIP 107171 / LMG 19424 / R1) (Ralstonia taiwanensis (strain LMG 19424)).